A 345-amino-acid polypeptide reads, in one-letter code: Holliday junction branch migration complex subunit RuvB (345 aa).

The interval 1–22 (MIETDALSGGTPRRLVTQQPLS) is disordered. The large ATPase domain (RuvB-L) stretch occupies residues 4-193 (TDALSGGTPR…FGIVARLEFY (190 aa)). ATP is bound by residues Leu-32, Arg-33, Gly-74, Lys-77, Thr-78, Thr-79, 140 to 142 (EDY), Arg-183, Tyr-193, and Arg-230. Thr-78 contributes to the Mg(2+) binding site. The segment at 194 to 264 (TPEELTRIVR…VADAALSMLD (71 aa)) is small ATPAse domain (RuvB-S). Residues 267 to 345 (PAGLDVMDRK…HFGFVPPERV (79 aa)) are head domain (RuvB-H). Arg-322 and Arg-327 together coordinate DNA.

This sequence belongs to the RuvB family. Homohexamer. Forms an RuvA(8)-RuvB(12)-Holliday junction (HJ) complex. HJ DNA is sandwiched between 2 RuvA tetramers; dsDNA enters through RuvA and exits via RuvB. An RuvB hexamer assembles on each DNA strand where it exits the tetramer. Each RuvB hexamer is contacted by two RuvA subunits (via domain III) on 2 adjacent RuvB subunits; this complex drives branch migration. In the full resolvosome a probable DNA-RuvA(4)-RuvB(12)-RuvC(2) complex forms which resolves the HJ.

It is found in the cytoplasm. The enzyme catalyses ATP + H2O = ADP + phosphate + H(+). The RuvA-RuvB-RuvC complex processes Holliday junction (HJ) DNA during genetic recombination and DNA repair, while the RuvA-RuvB complex plays an important role in the rescue of blocked DNA replication forks via replication fork reversal (RFR). RuvA specifically binds to HJ cruciform DNA, conferring on it an open structure. The RuvB hexamer acts as an ATP-dependent pump, pulling dsDNA into and through the RuvAB complex. RuvB forms 2 homohexamers on either side of HJ DNA bound by 1 or 2 RuvA tetramers; 4 subunits per hexamer contact DNA at a time. Coordinated motions by a converter formed by DNA-disengaged RuvB subunits stimulates ATP hydrolysis and nucleotide exchange. Immobilization of the converter enables RuvB to convert the ATP-contained energy into a lever motion, pulling 2 nucleotides of DNA out of the RuvA tetramer per ATP hydrolyzed, thus driving DNA branch migration. The RuvB motors rotate together with the DNA substrate, which together with the progressing nucleotide cycle form the mechanistic basis for DNA recombination by continuous HJ branch migration. Branch migration allows RuvC to scan DNA until it finds its consensus sequence, where it cleaves and resolves cruciform DNA. This chain is Holliday junction branch migration complex subunit RuvB, found in Laribacter hongkongensis (strain HLHK9).